The sequence spans 121 residues: Small ribosomal subunit protein uS13 (121 aa).

A disordered region spans residues 94-121; that stretch reads GLPMRGQRTRTNARTRKGPRKGAAALKK.

This sequence belongs to the universal ribosomal protein uS13 family. In terms of assembly, part of the 30S ribosomal subunit. Forms a loose heterodimer with protein S19. Forms two bridges to the 50S subunit in the 70S ribosome.

Its function is as follows. Located at the top of the head of the 30S subunit, it contacts several helices of the 16S rRNA. In the 70S ribosome it contacts the 23S rRNA (bridge B1a) and protein L5 of the 50S subunit (bridge B1b), connecting the 2 subunits; these bridges are implicated in subunit movement. Contacts the tRNAs in the A and P-sites. In Delftia acidovorans (strain DSM 14801 / SPH-1), this protein is Small ribosomal subunit protein uS13.